The chain runs to 280 residues: DNA repair protein RecO (280 aa).

The interval 261–280 (DMAHGNHTGQEDLPATASGA) is disordered.

The protein belongs to the RecO family.

Involved in DNA repair and RecF pathway recombination. In Mycolicibacterium smegmatis (strain ATCC 700084 / mc(2)155) (Mycobacterium smegmatis), this protein is DNA repair protein RecO.